Consider the following 25-residue polypeptide: TDPGHLQDVXVAINDPKXGVFVNRK.

It belongs to the germin family. In terms of assembly, oligomer (believed to be a pentamer but probably hexamer). The three different mass spectrometry results appear to arise from different glycosylation variants.

It localises to the secreted. Its subcellular location is the extracellular space. The protein resides in the apoplast. May play a role in plant defense. Probably has no oxalate oxidase activity even if the active site is conserved. The polypeptide is Germin-like protein (Citrus sinensis (Sweet orange)).